We begin with the raw amino-acid sequence, 294 residues long: Tetraspanin-15 (294 aa).

Over 1 to 23 (MPRGDSEQVRYCARFSYLWLKFS) the chain is Cytoplasmic. The chain crosses the membrane as a helical span at residues 24–44 (LIIYSTVFWLIGGLVLSVGIY). Over 45–62 (AEAERQKYKTLESAFLAP) the chain is Extracellular. A helical transmembrane segment spans residues 63-83 (AIILILLGVVMFIVSFIGVLA). Residues 84 to 94 (SLRDNLCLLQS) are Cytoplasmic-facing. A helical transmembrane segment spans residues 95–115 (FMYILGICLVMELIGGIVALI). Residues 116–235 (FRNQTIDFLN…WFMDNYTIMA (120 aa)) lie on the Extracellular side of the membrane. N-linked (GlcNAc...) asparagine glycosylation is present at Asn118. Disulfide bonds link Cys154/Cys219, Cys155/Cys185, Cys171/Cys179, and Cys186/Cys198. Asn189 and Asn230 each carry an N-linked (GlcNAc...) asparagine glycan. Residues 236 to 256 (GLLLGILLPQFLGVLLTLLYI) form a helical membrane-spanning segment. Residues 257–294 (TRVEDIILEHSVTDGLLGPGAKSRTDTAGTGCCLCYPD) are Cytoplasmic-facing.

The protein belongs to the tetraspanin (TM4SF) family. In terms of assembly, interacts with ADAM10; the interaction influences ADAM10 substrate specificity, endocytosis and turnover. In terms of processing, palmitoylated.

It localises to the cell membrane. The protein resides in the late endosome membrane. Part of TspanC8 subgroup, composed of 6 members that interact with the transmembrane metalloprotease ADAM10. This interaction is required for ADAM10 exit from the endoplasmic reticulum and for enzymatic maturation and trafficking to the cell surface as well as substrate specificity. Different TspanC8/ADAM10 complexes have distinct substrates. Promotes ADAM10-mediated cleavage of CDH2. Negatively regulates ligand-induced Notch activity probably by regulating ADAM10 activity. The protein is Tetraspanin-15 (Tspan15) of Mus musculus (Mouse).